The chain runs to 305 residues: Protoheme IX farnesyltransferase (305 aa).

The next 9 helical transmembrane spans lie at Val-31–His-51, Pro-52–Ile-72, Val-96–Ala-118, Asn-122–Leu-144, Asn-151–Ser-171, Ile-180–Cys-200, Ile-225–Asn-245, Phe-247–Leu-267, and Phe-281–Ile-301.

It belongs to the UbiA prenyltransferase family. Protoheme IX farnesyltransferase subfamily.

It is found in the cell inner membrane. The catalysed reaction is heme b + (2E,6E)-farnesyl diphosphate + H2O = Fe(II)-heme o + diphosphate. Its pathway is porphyrin-containing compound metabolism; heme O biosynthesis; heme O from protoheme: step 1/1. Its function is as follows. Converts heme B (protoheme IX) to heme O by substitution of the vinyl group on carbon 2 of heme B porphyrin ring with a hydroxyethyl farnesyl side group. This is Protoheme IX farnesyltransferase from Rickettsia peacockii (strain Rustic).